Consider the following 239-residue polypeptide: Phosphoribosylaminoimidazole-succinocarboxamide synthase (239 aa).

This sequence belongs to the SAICAR synthetase family.

It catalyses the reaction 5-amino-1-(5-phospho-D-ribosyl)imidazole-4-carboxylate + L-aspartate + ATP = (2S)-2-[5-amino-1-(5-phospho-beta-D-ribosyl)imidazole-4-carboxamido]succinate + ADP + phosphate + 2 H(+). Its pathway is purine metabolism; IMP biosynthesis via de novo pathway; 5-amino-1-(5-phospho-D-ribosyl)imidazole-4-carboxamide from 5-amino-1-(5-phospho-D-ribosyl)imidazole-4-carboxylate: step 1/2. The polypeptide is Phosphoribosylaminoimidazole-succinocarboxamide synthase (Dichelobacter nodosus (strain VCS1703A)).